The chain runs to 252 residues: 3-dehydroquinate dehydratase (252 aa).

Residues serine 21, glutamate 46–arginine 48, and arginine 82 contribute to the 3-dehydroquinate site. Catalysis depends on histidine 143, which acts as the Proton donor/acceptor. Lysine 170 acts as the Schiff-base intermediate with substrate in catalysis. Arginine 213, serine 232, and glutamine 236 together coordinate 3-dehydroquinate.

It belongs to the type-I 3-dehydroquinase family. As to quaternary structure, homodimer.

It catalyses the reaction 3-dehydroquinate = 3-dehydroshikimate + H2O. Its pathway is metabolic intermediate biosynthesis; chorismate biosynthesis; chorismate from D-erythrose 4-phosphate and phosphoenolpyruvate: step 3/7. Functionally, involved in the third step of the chorismate pathway, which leads to the biosynthesis of aromatic amino acids. Catalyzes the cis-dehydration of 3-dehydroquinate (DHQ) and introduces the first double bond of the aromatic ring to yield 3-dehydroshikimate. In Salmonella choleraesuis (strain SC-B67), this protein is 3-dehydroquinate dehydratase.